A 986-amino-acid polypeptide reads, in one-letter code: Regulator of telomere elongation helicase 1 homolog (986 aa).

The Helicase ATP-binding domain maps to 7–326; it reads AGIPVHFPFE…KEMLLELEKA (320 aa). An ATP-binding site is contributed by 42 to 49; the sequence is SPTGTGKT. [4Fe-4S] cluster contacts are provided by C148, C166, C175, and C211. Positions 254–257 match the DEAH box motif; that stretch reads DEGH. T875 bears the Phosphothreonine mark.

The protein belongs to the helicase family. RAD3/XPD subfamily.

It is found in the nucleus. The catalysed reaction is ATP + H2O = ADP + phosphate + H(+). Functionally, a probable ATP-dependent DNA helicase implicated in DNA repair and the maintenance of genomic stability. Acts as an anti-recombinase to counteract toxic recombination and limit crossover during meiosis. Regulates meiotic recombination and crossover homeostasis by physically dissociating strand invasion events and thereby promotes noncrossover repair by meiotic synthesis dependent strand annealing (SDSA) as well as disassembly of D loop recombination intermediates. This chain is Regulator of telomere elongation helicase 1 homolog, found in Drosophila grimshawi (Hawaiian fruit fly).